The primary structure comprises 247 residues: Probable transcriptional regulatory protein Syncc9605_2132 (247 aa).

The protein belongs to the TACO1 family.

The protein localises to the cytoplasm. This Synechococcus sp. (strain CC9605) protein is Probable transcriptional regulatory protein Syncc9605_2132.